Here is a 310-residue protein sequence, read N- to C-terminus: Beta-ketoacyl-[acyl-carrier-protein] synthase III 1 (310 aa).

Catalysis depends on residues Cys-112 and His-235. Residues 236-240 (QANIR) are ACP-binding. Asn-265 is a catalytic residue.

The protein belongs to the thiolase-like superfamily. FabH family. Homodimer.

The protein localises to the cytoplasm. The catalysed reaction is malonyl-[ACP] + acetyl-CoA + H(+) = 3-oxobutanoyl-[ACP] + CO2 + CoA. Its pathway is lipid metabolism; fatty acid biosynthesis. In terms of biological role, catalyzes the condensation reaction of fatty acid synthesis by the addition to an acyl acceptor of two carbons from malonyl-ACP. Catalyzes the first condensation reaction which initiates fatty acid synthesis and may therefore play a role in governing the total rate of fatty acid production. Possesses both acetoacetyl-ACP synthase and acetyl transacylase activities. Its substrate specificity determines the biosynthesis of branched-chain and/or straight-chain of fatty acids. This Bacillus cereus (strain ATCC 14579 / DSM 31 / CCUG 7414 / JCM 2152 / NBRC 15305 / NCIMB 9373 / NCTC 2599 / NRRL B-3711) protein is Beta-ketoacyl-[acyl-carrier-protein] synthase III 1.